Consider the following 317-residue polypeptide: Methionyl-tRNA formyltransferase (317 aa).

A (6S)-5,6,7,8-tetrahydrofolate-binding site is contributed by 117–120 (SLLP).

The protein belongs to the Fmt family.

The catalysed reaction is L-methionyl-tRNA(fMet) + (6R)-10-formyltetrahydrofolate = N-formyl-L-methionyl-tRNA(fMet) + (6S)-5,6,7,8-tetrahydrofolate + H(+). In terms of biological role, attaches a formyl group to the free amino group of methionyl-tRNA(fMet). The formyl group appears to play a dual role in the initiator identity of N-formylmethionyl-tRNA by promoting its recognition by IF2 and preventing the misappropriation of this tRNA by the elongation apparatus. This chain is Methionyl-tRNA formyltransferase, found in Herminiimonas arsenicoxydans.